Reading from the N-terminus, the 120-residue chain is Seripauperin-2 (120 aa).

A helical transmembrane segment spans residues 7 to 24 (IAAGVAAIAATASATTTL).

This sequence belongs to the SRP1/TIP1 family. Seripauperin subfamily.

Its subcellular location is the membrane. The sequence is that of Seripauperin-2 (PAU2) from Saccharomyces cerevisiae (strain ATCC 204508 / S288c) (Baker's yeast).